A 403-amino-acid chain; its full sequence is MPVARSSKAQSSKQPRASKAPSVTENVPPEKEEGCQAKRSPSSPQGGPKKRSAFGDITNAHKNQVVTGKKEGVKAPTRKATRAPPAPIVAKNNEINLKKSLRKTPPADVPVEPEKDSVPEEPVQQVPVVEDIDKEQLGDPYANAEYAKEIFDYMREREEKFLLPDYMEKQSDISRDMRAILVDWMVEVQENFELNHETLYLAVKLVDHYLVEVVSMRDKLQLIGSTAVLIASKFEERCPPCVDDFLYICDDAYKREELIAMETSILRTLNFDINIPIPYRFLRRFAKCARASMETLTLARFVCEMTLQEYDYARERPSKLAASSLLLALTMKNLGGWTPTLEYYSGYCAQDLHPLVKRLNFLLTYQPCDKLKAVRTKYSHRVFFEVAKTTPMDMMKLEEKLKS.

Disordered stretches follow at residues 1 to 86 and 102 to 122; these read MPVA…APPA and RKTP…PEEP. A compositionally biased stretch (polar residues) spans 7–25; that stretch reads SKAQSSKQPRASKAPSVTE. Residues 51–59 carry the D-box motif; that stretch reads RSAFGDITN.

This sequence belongs to the cyclin family. Cyclin AB subfamily. Interacts with the CDK1 and CDK2 protein kinases. In terms of processing, ubiquitinated, leading to its degradation.

The protein localises to the nucleus. In terms of biological role, cyclins are positive regulatory subunits of the cyclin-dependent kinases (CDKs), and thereby play an essential role in the control of the cell cycle, notably via their destruction during cell division. Could be involved at the G2/M (mitosis or meiosis) transition. G2/M cyclins accumulate steadily during G2 and are abruptly destroyed at mitosis. This Gallus gallus (Chicken) protein is G2/mitotic-specific cyclin-B3 (CCNB3).